A 513-amino-acid polypeptide reads, in one-letter code: Cytochrome P450 4d10 (513 aa).

Heme-binding residues include Glu317 and Cys457.

The protein belongs to the cytochrome P450 family. Heme serves as cofactor.

It is found in the endoplasmic reticulum membrane. It localises to the microsome membrane. Its function is as follows. May play an important role in the maintenance of specific insect-host plant relationships. May be involved in xenobiotic metabolism. The chain is Cytochrome P450 4d10 (Cyp4d10) from Drosophila mettleri (Fruit fly).